The sequence spans 89 residues: Small ribosomal subunit protein uS19 (89 aa).

It belongs to the universal ribosomal protein uS19 family.

Its function is as follows. Protein S19 forms a complex with S13 that binds strongly to the 16S ribosomal RNA. This Porphyromonas gingivalis (strain ATCC 33277 / DSM 20709 / CIP 103683 / JCM 12257 / NCTC 11834 / 2561) protein is Small ribosomal subunit protein uS19.